Here is a 354-residue protein sequence, read N- to C-terminus: Multiple sugar-binding periplasmic receptor ChvE (354 aa).

An N-terminal signal peptide occupies residues Met1–Ala25.

This sequence belongs to the bacterial solute-binding protein 2 family.

The protein resides in the periplasm. Functionally, required for effective transcriptional induction of the vir genes by monosaccharides in response to plant signals and for normal growth and chemotaxis towards certain sugars. Functions as a periplasmic multiple sugar-binding receptor protein. It does not interact with a transport system. This is Multiple sugar-binding periplasmic receptor ChvE (chvE) from Rhizobium radiobacter (Agrobacterium tumefaciens).